Here is a 459-residue protein sequence, read N- to C-terminus: Probable 3-ketoacyl-CoA synthase 14 (459 aa).

Positions 1–25 (MFIAMADFKLLLLILILLSLFELDL) are cleaved as a signal peptide. Residues 32 to 52 (FFSPFPVKIGLLLISIFFYAY) form a helical membrane-spanning segment. The 283-residue stretch at 52-334 (YSTTRSKPVY…FILFLVKSKL (283 aa)) folds into the FAE domain. Residues histidine 268, histidine 352, histidine 356, histidine 385, and asparagine 389 contribute to the active site.

It belongs to the thiolase-like superfamily. Chalcone/stilbene synthases family. As to expression, expressed in siliques.

The protein localises to the membrane. The catalysed reaction is a very-long-chain acyl-CoA + malonyl-CoA + H(+) = a very-long-chain 3-oxoacyl-CoA + CO2 + CoA. It functions in the pathway lipid metabolism; fatty acid biosynthesis. The polypeptide is Probable 3-ketoacyl-CoA synthase 14 (Arabidopsis thaliana (Mouse-ear cress)).